We begin with the raw amino-acid sequence, 567 residues long: MAVSTNELAILAIVLLVTAVVFYTKGTRRAPLPPGPRGIPFLGNLFQFNVMRPYPQYLKWAQKYGPVFSIKLGSQRIIVLSTSEAADELFVTRSKLYSSHESPHVGFDLVSDQQRMVFMPYSREWKIVRKNVHGILGPGPSKQMRKMQDLECRIMLHDLLCHGDTSIVEDFVEGPHGKVPERHWFSIIRRYTTSLMMTLVYGRRIHRIVDNPELHQVYEMMSNMTHVSQPGRYLVDALPILRWLPDIMAPWRAEGKRMHEWEMGFWGKLFADSRTAFLNGTGLNGFVQSYLSARAEAGLEDLPGKGATEDGAGWMRDKLITYTAVSIIEAGSDTTSTAVFSFVLLMLSNPDALRRAKEEMGAVVGSSRMPDWEDEDRLPWLTACIKETLRCAPPLPLGIPHKADEDDVYNGYLIPKGSTVIGNIWAIHMDPVRYPDPTAFKPERFYNPDGKLNWASGPDTHNRDHYIFGWGRRFCSGKYLAEASMFIVLSRLIWGFDFYAASDPQTGKVKLPDVNDVDTFTDGLVTAPKIYPVGFKPRSEKHAEMIKASYRDVQNDWQSMGLAGDER.

Residues 7–24 (ELAILAIVLLVTAVVFYT) form a helical membrane-spanning segment. N-linked (GlcNAc...) asparagine glycosylation is found at Asn-223 and Asn-279. Residue Cys-475 participates in heme binding.

Belongs to the cytochrome P450 family. Heme is required as a cofactor.

The protein resides in the membrane. It participates in secondary metabolite biosynthesis. Its function is as follows. Cytochrome P450 monooxygenase that is able to use dehydroabietic acid as a substrate for oxidation. The protein is Cytochrome P450 monooxygenase 79 of Postia placenta (strain ATCC 44394 / Madison 698-R) (Brown rot fungus).